The sequence spans 202 residues: MVIQRKYRASRRLGVNLWGRSKDPFNTRNYPPGQHGGMGYKKPSDFGKQFAAHKKFKFYYAINSKQMRNIFLKAYKKRGDTGDNFVGLLESRLSSVLYNSGLVPTIFSARQLISHKHVLVNGKTVNISSYVVKVGDVVTLKEKAKNLPAVVFAVQSQEQKVPDYLEVDTQEKSIRYLRVPKYCEVPYPATMEVNLVIEFYSR.

An S4 RNA-binding domain is found at 91–168 (SRLSSVLYNS…QKVPDYLEVD (78 aa)).

The protein belongs to the universal ribosomal protein uS4 family. In terms of assembly, part of the 30S ribosomal subunit. Contacts protein S5. The interaction surface between S4 and S5 is involved in control of translational fidelity.

Its function is as follows. One of the primary rRNA binding proteins, it binds directly to 16S rRNA where it nucleates assembly of the body of the 30S subunit. With S5 and S12 plays an important role in translational accuracy. This is Small ribosomal subunit protein uS4 from Ehrlichia chaffeensis (strain ATCC CRL-10679 / Arkansas).